A 373-amino-acid chain; its full sequence is D-alanine--D-alanine ligase (373 aa).

In terms of domain architecture, ATP-grasp spans 165–369 (KRLAREAGIP…FGDLVSALIA (205 aa)). 192-247 (KERLGLPVFVKPARGGSSIGISKVDSWEEFDAAIDLAFSNDNKVIVEAMIHGAEVE) is a binding site for ATP. The Mg(2+) site is built by aspartate 324, glutamate 336, and asparagine 338.

It belongs to the D-alanine--D-alanine ligase family. Mg(2+) is required as a cofactor. The cofactor is Mn(2+).

The protein localises to the cytoplasm. It carries out the reaction 2 D-alanine + ATP = D-alanyl-D-alanine + ADP + phosphate + H(+). It functions in the pathway cell wall biogenesis; peptidoglycan biosynthesis. In terms of biological role, cell wall formation. In Corynebacterium jeikeium (strain K411), this protein is D-alanine--D-alanine ligase.